The chain runs to 353 residues: Uroporphyrinogen decarboxylase (353 aa).

Residues 30–34 (RQAGR), D79, Y154, S209, and H332 contribute to the substrate site.

Belongs to the uroporphyrinogen decarboxylase family. Homodimer.

The protein resides in the cytoplasm. It catalyses the reaction uroporphyrinogen III + 4 H(+) = coproporphyrinogen III + 4 CO2. It participates in porphyrin-containing compound metabolism; protoporphyrin-IX biosynthesis; coproporphyrinogen-III from 5-aminolevulinate: step 4/4. Its function is as follows. Catalyzes the decarboxylation of four acetate groups of uroporphyrinogen-III to yield coproporphyrinogen-III. The polypeptide is Uroporphyrinogen decarboxylase (Mycolicibacterium smegmatis (strain ATCC 700084 / mc(2)155) (Mycobacterium smegmatis)).